The primary structure comprises 77 residues: Small ribosomal subunit protein bS21 (77 aa).

The protein belongs to the bacterial ribosomal protein bS21 family.

The polypeptide is Small ribosomal subunit protein bS21 (Methylococcus capsulatus (strain ATCC 33009 / NCIMB 11132 / Bath)).